Here is a 299-residue protein sequence, read N- to C-terminus: Methionyl-tRNA formyltransferase (299 aa).

Position 109 to 112 (Ser-109 to Pro-112) interacts with (6S)-5,6,7,8-tetrahydrofolate.

Belongs to the Fmt family.

It catalyses the reaction L-methionyl-tRNA(fMet) + (6R)-10-formyltetrahydrofolate = N-formyl-L-methionyl-tRNA(fMet) + (6S)-5,6,7,8-tetrahydrofolate + H(+). In terms of biological role, attaches a formyl group to the free amino group of methionyl-tRNA(fMet). The formyl group appears to play a dual role in the initiator identity of N-formylmethionyl-tRNA by promoting its recognition by IF2 and preventing the misappropriation of this tRNA by the elongation apparatus. This chain is Methionyl-tRNA formyltransferase, found in Wolbachia pipientis subsp. Culex pipiens (strain wPip).